The sequence spans 178 residues: MHRPNFRPPTPPYPSPGIGGWGGGNNFRGALGGGPRPPSPRDGYGSPHHTPPCGPRARPYGSSQSPRHGGNFSGARFGSPSPGGYPGSYSRSPAGSQHQFGYSPGQQQTYPQGSPRTSTPFGSGRGREKRMSNELESYFKPSMLEDPWAGLEPVSVVDISQQYSNTQTFTGKKGRYFS.

Residues 1–15 (MHRPNFRPPTPPYPS) show a composition bias toward pro residues. Positions 1–134 (MHRPNFRPPT…RGREKRMSNE (134 aa)) are disordered. A compositionally biased stretch (gly residues) spans 17–34 (GIGGWGGGNNFRGALGGG). R36 is modified (asymmetric dimethylarginine). S39 and S46 each carry phosphoserine. At T50 the chain carries Phosphothreonine. R56 is subject to Omega-N-methylarginine. Residues R58, R67, and R76 each carry the asymmetric dimethylarginine modification. Positions 78 to 96 (GSPSPGGYPGSYSRSPAGS) are enriched in low complexity. S79, S81, S92, S103, and S114 each carry phosphoserine. The span at 97–121 (QHQFGYSPGQQQTYPQGSPRTSTPF) shows a compositional bias: polar residues. Position 116 is an omega-N-methylarginine (R116). At T119 the chain carries Phosphothreonine. 2 positions are modified to phosphoserine: S123 and S132.

In terms of assembly, interacts with PLK1; phosphorylation-dependent. Post-translationally, phosphorylated during mitosis in the cell cycle probably by CDK1.

The protein resides in the nucleus. It localises to the cytoplasm. Its subcellular location is the cytoskeleton. The protein localises to the microtubule organizing center. It is found in the centrosome. Its function is as follows. May play a role in maintenance of cell cycle integrity by regulating mitosis or cytokinesis. This Mus musculus (Mouse) protein is M-phase-specific PLK1-interacting protein (Mplkip).